Here is a 78-residue protein sequence, read N- to C-terminus: Acyl carrier protein (78 aa).

The region spanning 2-77 (SDIEQRVKKI…QAIDYVNANL (76 aa)) is the Carrier domain. Ser-37 is modified (O-(pantetheine 4'-phosphoryl)serine).

It belongs to the acyl carrier protein (ACP) family. In terms of processing, 4'-phosphopantetheine is transferred from CoA to a specific serine of apo-ACP by AcpS. This modification is essential for activity because fatty acids are bound in thioester linkage to the sulfhydryl of the prosthetic group.

The protein localises to the cytoplasm. It participates in lipid metabolism; fatty acid biosynthesis. Functionally, carrier of the growing fatty acid chain in fatty acid biosynthesis. This is Acyl carrier protein from Methylobacillus flagellatus (strain ATCC 51484 / DSM 6875 / VKM B-1610 / KT).